The sequence spans 164 residues: Putative pre-16S rRNA nuclease (164 aa).

It belongs to the YqgF nuclease family.

Its subcellular location is the cytoplasm. Its function is as follows. Could be a nuclease involved in processing of the 5'-end of pre-16S rRNA. This is Putative pre-16S rRNA nuclease from Rhizobium etli (strain CIAT 652).